The chain runs to 179 residues: NADH-quinone oxidoreductase subunit I (179 aa).

4Fe-4S ferredoxin-type domains are found at residues 45 to 74 (RHPD…VEAA) and 90 to 119 (KVYE…LGNE). Cys54, Cys57, Cys60, Cys64, Cys99, Cys102, Cys105, and Cys109 together coordinate [4Fe-4S] cluster. Residues 146-179 (PQRREAQRTGKPVRLGFKVPKGPRPELEGVEYPR) form a disordered region. The segment covering 168–179 (PRPELEGVEYPR) has biased composition (basic and acidic residues).

This sequence belongs to the complex I 23 kDa subunit family. In terms of assembly, NDH-1 is composed of 15 different subunits. Subunits NuoA, H, J, K, L, M, N constitute the membrane sector of the complex. It depends on [4Fe-4S] cluster as a cofactor.

It is found in the cell membrane. It catalyses the reaction a quinone + NADH + 5 H(+)(in) = a quinol + NAD(+) + 4 H(+)(out). In terms of biological role, NDH-1 shuttles electrons from NADH, via FMN and iron-sulfur (Fe-S) centers, to quinones in the respiratory chain. The immediate electron acceptor for the enzyme in this species is believed to be ubiquinone. Couples the redox reaction to proton translocation (for every two electrons transferred, four hydrogen ions are translocated across the cytoplasmic membrane), and thus conserves the redox energy in a proton gradient. In Deinococcus geothermalis (strain DSM 11300 / CIP 105573 / AG-3a), this protein is NADH-quinone oxidoreductase subunit I.